The sequence spans 256 residues: Pimeloyl-[acyl-carrier protein] methyl ester esterase (256 aa).

One can recognise an AB hydrolase-1 domain in the interval 15–242 (HLVLLHGWGL…AAHAPFISHP (228 aa)). Substrate is bound by residues Trp22, 82-83 (SL), and 143-147 (FLALQ). Residue Ser82 is the Nucleophile of the active site. Active-site residues include Asp207 and His235. Position 235 (His235) interacts with substrate.

It belongs to the AB hydrolase superfamily. Carboxylesterase BioH family. Monomer.

Its subcellular location is the cytoplasm. It carries out the reaction 6-carboxyhexanoyl-[ACP] methyl ester + H2O = 6-carboxyhexanoyl-[ACP] + methanol + H(+). It functions in the pathway cofactor biosynthesis; biotin biosynthesis. Its function is as follows. The physiological role of BioH is to remove the methyl group introduced by BioC when the pimeloyl moiety is complete. It allows to synthesize pimeloyl-ACP via the fatty acid synthetic pathway through the hydrolysis of the ester bonds of pimeloyl-ACP esters. This Escherichia coli (strain SMS-3-5 / SECEC) protein is Pimeloyl-[acyl-carrier protein] methyl ester esterase.